The sequence spans 100 residues: A-type ATP synthase subunit F (100 aa).

The protein belongs to the V-ATPase F subunit family. In terms of assembly, has multiple subunits with at least A(3), B(3), C, D, E, F, H, I and proteolipid K(x).

It is found in the cell membrane. Its function is as follows. Component of the A-type ATP synthase that produces ATP from ADP in the presence of a proton gradient across the membrane. The sequence is that of A-type ATP synthase subunit F from Methanospirillum hungatei JF-1 (strain ATCC 27890 / DSM 864 / NBRC 100397 / JF-1).